Consider the following 361-residue polypeptide: GDSL esterase/lipase At4g18970 (361 aa).

The first 22 residues, 1–22, serve as a signal peptide directing secretion; sequence MARVCVMMMAMAIAMAMNIAMG. The Nucleophile role is filled by Ser35. Residues Asp325 and His328 contribute to the active site.

This sequence belongs to the 'GDSL' lipolytic enzyme family.

Its subcellular location is the secreted. The chain is GDSL esterase/lipase At4g18970 from Arabidopsis thaliana (Mouse-ear cress).